A 296-amino-acid chain; its full sequence is Uracil phosphoribosyltransferase, chloroplastic (296 aa).

The transit peptide at 1–61 (MACSIGNAFR…SSSLSRRTIR (61 aa)) directs the protein to the chloroplast. Residue A2 is modified to N-acetylalanine. 148 to 151 (REPI) lines the GTP pocket. Residues R158, R183, D211, 216–219 (TGGT), and D282 contribute to the 5-phospho-alpha-D-ribose 1-diphosphate site. 281 to 283 (GDA) contributes to the uracil binding site.

Belongs to the UPRTase family. It depends on Mg(2+) as a cofactor.

Its subcellular location is the plastid. It localises to the chloroplast. It carries out the reaction UMP + diphosphate = 5-phospho-alpha-D-ribose 1-diphosphate + uracil. Its pathway is pyrimidine metabolism; UMP biosynthesis via salvage pathway; UMP from uracil: step 1/1. Its activity is regulated as follows. Allosterically activated by GTP. Its function is as follows. Uracil phosphoribosyltransferase (UPRT) that catalyzes the conversion of uracil and 5-phospho-alpha-D-ribose 1-diphosphate (PRPP) to UMP and diphosphate. Is probably the only functional UPRT, since the dual-domain proteins of the UKL family seem to lack this activity. This chain is Uracil phosphoribosyltransferase, chloroplastic (UPP), found in Arabidopsis thaliana (Mouse-ear cress).